Reading from the N-terminus, the 1112-residue chain is Mediator of RNA polymerase II transcription subunit 14 (1112 aa).

The protein belongs to the Mediator complex subunit 14 family. Component of the Mediator complex.

It localises to the nucleus. Functionally, component of the Mediator complex, a coactivator involved in the regulated transcription of nearly all RNA polymerase II-dependent genes. Mediator functions as a bridge to convey information from gene-specific regulatory proteins to the basal RNA polymerase II transcription machinery. Mediator is recruited to promoters by direct interactions with regulatory proteins and serves as a scaffold for the assembly of a functional preinitiation complex with RNA polymerase II and the general transcription factors. This chain is Mediator of RNA polymerase II transcription subunit 14 (RGR1), found in Scheffersomyces stipitis (strain ATCC 58785 / CBS 6054 / NBRC 10063 / NRRL Y-11545) (Yeast).